The sequence spans 347 residues: ATP-dependent (S)-NAD(P)H-hydrate dehydratase (347 aa).

One can recognise a YjeF C-terminal domain in the interval Thr-53 to Leu-344. The residue at position 85 (Tyr-85) is a Phosphotyrosine. Residues Gly-153 and Asn-206–Arg-212 each bind (6S)-NADPHX. An N-linked (GlcNAc...) asparagine glycan is attached at Asn-240. ATP contacts are provided by residues Lys-246–Asp-250 and Gly-265–Gly-274. Asp-275 contacts (6S)-NADPHX. Asn-297 is a glycosylation site (N-linked (GlcNAc...) asparagine).

This sequence belongs to the NnrD/CARKD family. Requires Mg(2+) as cofactor.

Its subcellular location is the mitochondrion. The enzyme catalyses (6S)-NADHX + ATP = ADP + phosphate + NADH + H(+). It catalyses the reaction (6S)-NADPHX + ATP = ADP + phosphate + NADPH + H(+). Functionally, catalyzes the dehydration of the S-form of NAD(P)HX at the expense of ATP, which is converted to ADP. Together with NAD(P)HX epimerase, which catalyzes the epimerization of the S- and R-forms, the enzyme allows the repair of both epimers of NAD(P)HX, a damaged form of NAD(P)H that is a result of enzymatic or heat-dependent hydration. This chain is ATP-dependent (S)-NAD(P)H-hydrate dehydratase, found in Homo sapiens (Human).